A 136-amino-acid chain; its full sequence is Autophagy-related protein 41 (136 aa).

Residues 127–136 form an ATG9-binding region; it reads QNYRLWLSSV.

Interacts with ATG9.

It localises to the preautophagosomal structure membrane. Functionally, involved in both selective and non-selective autophagy. Does not appear to play a role in determining the size of autophagosomes, but rather influences their formation rate. With ATG9, plays a role in the delivery of donor membrane to expanding phagophore. This chain is Autophagy-related protein 41, found in Saccharomyces cerevisiae (strain ATCC 204508 / S288c) (Baker's yeast).